The primary structure comprises 231 residues: tRNA (guanine-N(1)-)-methyltransferase (231 aa).

Residues glycine 112 and 132–137 (LGDFVL) each bind S-adenosyl-L-methionine.

The protein belongs to the RNA methyltransferase TrmD family. Homodimer.

Its subcellular location is the cytoplasm. The catalysed reaction is guanosine(37) in tRNA + S-adenosyl-L-methionine = N(1)-methylguanosine(37) in tRNA + S-adenosyl-L-homocysteine + H(+). In terms of biological role, specifically methylates guanosine-37 in various tRNAs. The polypeptide is tRNA (guanine-N(1)-)-methyltransferase (Gloeothece citriformis (strain PCC 7424) (Cyanothece sp. (strain PCC 7424))).